A 660-amino-acid polypeptide reads, in one-letter code: MSGQSLTDRITAAQHSVTGSAVSKTVCKATTHEIMGPKKKHLDYLIQCTNEMNVNIPQLADSLFERTTNSSWVVVFKSLITTHHLMVYGNERFIQYLASRNTLFNLSNFLDKSGLQGYDMSTFIRRYSRYLNEKAVSYRQVAFDFTKVKRGADGVMRTMNTEKLLKTVPIIQNQMDALLDFNVNSNELTNGVINAAFMLLFKDAIRLFAAYNEGIINLLEKYFDMKKNQCKEGLDIYKKFLTRMTRISEFLKVAEQVGIDRGDIPDLSQAPSSLLDALEQHLASLEGKKIKDSTAASRATTLSNAVSSLASTGLSLTKVDEREKQAALEEEQARLKALKEQRLKELAKKPHTSLTTAASPVSTSAGGIMTAPAIDIFSTPSSSNSTSKLPNDLLDLQQPTFHPSVHAMSAAPQGASTWGDPFSATLDAVEDAIPSLNPFLTKSSGDVHLPIASDVSTFTTRTPTHEMFVGFSPSPVAQPHSSAGLNVDFESVFGNKSTNVAVDSGGFDELGGLLKPTVASQNQSLPVAKLPPNKLVSDDLDSSLANLVGNLGIGNGTTKNDVSWSQPGEKKLTGGSNWQPKVAPTTAWSAATMNGMHFPQYAPPVMAYPATTPTGMIGYGIPPQMGSVPVMTQPTLIYSQPVMRPPNPFGPVSGAQIQFM.

Ser2 is modified (N-acetylserine). Positions 14-145 (QHSVTGSAVS…VSYRQVAFDF (132 aa)) constitute an ENTH domain. A phosphoserine mark is found at Ser16 and Ser20. Residues 221-294 (KYFDMKKNQC…LEGKKIKDST (74 aa)) are interaction with PIMREG. Lys238 is covalently cross-linked (Glycyl lysine isopeptide (Lys-Gly) (interchain with G-Cter in SUMO2)). A phosphoserine mark is found at Ser303 and Ser315. Positions 556–566 (GTTKNDVSWSQ) are enriched in polar residues. Residues 556-580 (GTTKNDVSWSQPGEKKLTGGSNWQP) are disordered.

This sequence belongs to the PICALM/SNAP91 family. Binds to clathrin; involves primarily the C-terminal sequences, but the full-length protein is required for full binding capacity. Binds phosphatidylinositol 4,5- bisphosphate. Interacts with PIMREG; this interaction may change the subcellular location into the nucleus. Interacts with AP2A1 (via its alpha-appendage domain). Interacts (via N-terminus) with VAMP2; VAMP3; VAMP7 and VAMP8 (Via N-terminus). Interacts with LC3/MAP1LC3A. As to expression, skins and livers of 1-week-old mice.

The protein localises to the cell membrane. The protein resides in the membrane. It localises to the clathrin-coated pit. It is found in the golgi apparatus. Its subcellular location is the cytoplasmic vesicle. The protein localises to the clathrin-coated vesicle. The protein resides in the nucleus. In terms of biological role, cytoplasmic adapter protein that plays a critical role in clathrin-mediated endocytosis which is important in processes such as internalization of cell receptors, synaptic transmission or removal of apoptotic cells. Recruits AP-2 and attaches clathrin triskelions to the cytoplasmic side of plasma membrane leading to clathrin-coated vesicles (CCVs) assembly. Furthermore, regulates clathrin-coated vesicle size and maturation by directly sensing and driving membrane curvature. In addition to binding to clathrin, mediates the endocytosis of small R-SNARES (Soluble NSF Attachment Protein REceptors) between plasma membranes and endosomes including VAMP2, VAMP3, VAMP4, VAMP7 or VAMP8. In turn, PICALM-dependent SNARE endocytosis is required for the formation and maturation of autophagic precursors. Modulates thereby autophagy and the turnover of autophagy substrates such as MAPT/TAU or amyloid precursor protein cleaved C-terminal fragment (APP-CTF). This chain is Phosphatidylinositol-binding clathrin assembly protein (Picalm), found in Mus musculus (Mouse).